We begin with the raw amino-acid sequence, 446 residues long: Probable E3 ubiquitin-protein ligase XBOS31 (446 aa).

5 ANK repeats span residues 46–75, 79–108, 113–142, 160–189, and 197–227; these read DRFT…DVDV, KKQT…NVLT, RART…QAQG, RGAT…IVSA, and PGST…RLQR. The segment at 317 to 366 adopts an RING-type zinc-finger fold; the sequence is CNICFEQACSMEVKECGHQMCAACTLAICCHSKPNPKTLLLHPPACPFCR. The tract at residues 376 to 401 is disordered; the sequence is TTNSNKTNSRRRSRSRSSSFKGGLSS.

It catalyses the reaction S-ubiquitinyl-[E2 ubiquitin-conjugating enzyme]-L-cysteine + [acceptor protein]-L-lysine = [E2 ubiquitin-conjugating enzyme]-L-cysteine + N(6)-ubiquitinyl-[acceptor protein]-L-lysine.. It participates in protein modification; protein ubiquitination. The protein is Probable E3 ubiquitin-protein ligase XBOS31 (XBOS31) of Oryza sativa subsp. japonica (Rice).